A 124-amino-acid polypeptide reads, in one-letter code: MSLLRCRPRDLPSVSLSVLFLVSFVASMSTESLSPTPGPESSRWSLVRARVLEMVEPLVTRTRDRWQWFWGPGAVQGFMQTYYEDHLKDLGPRTQAWLQSSRDHLLNKTHSLCPRLLCKDRTQG.

The first 27 residues, 1–27, serve as a signal peptide directing secretion; sequence MSLLRCRPRDLPSVSLSVLFLVSFVAS. The N-linked (GlcNAc...) asparagine glycan is linked to asparagine 107.

It belongs to the apolipoprotein C4 family. Expressed by the liver and secreted in plasma.

It is found in the secreted. Functionally, may participate in lipoprotein metabolism. This Mus musculus (Mouse) protein is Apolipoprotein C-IV (Apoc4).